Consider the following 684-residue polypeptide: UvrABC system protein C (684 aa).

Residues 16 to 95 (TDPGVYKFRD…IKRFDPRFNV (80 aa)) form the GIY-YIG domain. The UVR domain maps to 208–243 (APVRKRVTQRMEEAAENLEFELAARLRDDLGAIDKL). A compositionally biased stretch (basic and acidic residues) spans 332-352 (EAAEDAKLERRGVDQESHAEP). Positions 332–357 (EAAEDAKLERRGVDQESHAEPRQGNA) are disordered.

The protein belongs to the UvrC family. As to quaternary structure, interacts with UvrB in an incision complex.

The protein localises to the cytoplasm. The UvrABC repair system catalyzes the recognition and processing of DNA lesions. UvrC both incises the 5' and 3' sides of the lesion. The N-terminal half is responsible for the 3' incision and the C-terminal half is responsible for the 5' incision. The polypeptide is UvrABC system protein C (Corynebacterium aurimucosum (strain ATCC 700975 / DSM 44827 / CIP 107346 / CN-1) (Corynebacterium nigricans)).